Reading from the N-terminus, the 517-residue chain is Crotonobetaine/carnitine--CoA ligase (517 aa).

This sequence belongs to the ATP-dependent AMP-binding enzyme family.

It carries out the reaction 4-(trimethylamino)butanoate + ATP + CoA = 4-(trimethylamino)butanoyl-CoA + AMP + diphosphate. The enzyme catalyses crotonobetaine + ATP + CoA = crotonobetainyl-CoA + AMP + diphosphate. The catalysed reaction is (R)-carnitine + ATP + CoA = (R)-carnitinyl-CoA + AMP + diphosphate. It participates in amine and polyamine metabolism; carnitine metabolism. In terms of biological role, catalyzes the transfer of CoA to carnitine, generating the initial carnitinyl-CoA needed for the CaiB reaction cycle. Also has activity toward crotonobetaine and gamma-butyrobetaine. The chain is Crotonobetaine/carnitine--CoA ligase from Salmonella arizonae (strain ATCC BAA-731 / CDC346-86 / RSK2980).